Reading from the N-terminus, the 323-residue chain is Formyltetrahydrofolate deformylase 1, mitochondrial (323 aa).

The transit peptide at 1–25 (MIRRITERASGFAKNIPILKSSRFH) directs the protein to the mitochondrion. An ACT domain is found at 41 to 124 (VHVFHCQDAV…SVVRVPSIDP (84 aa)). Asp267 is a catalytic residue.

The protein belongs to the PurU family. As to expression, expressed in leaves, cotyledons, roots, seeds and flowers.

The protein localises to the mitochondrion. The enzyme catalyses (6R)-10-formyltetrahydrofolate + H2O = (6S)-5,6,7,8-tetrahydrofolate + formate + H(+). In terms of biological role, deformylase involved in photorespiration. Prevents excessive accumulation of 5-formyl tetrahydrofolate (THF), a potent inhibitor of the Gly decarboxylase/Ser hydroxymethyltransferase complex. The protein is Formyltetrahydrofolate deformylase 1, mitochondrial (PURU1) of Arabidopsis thaliana (Mouse-ear cress).